A 460-amino-acid chain; its full sequence is Muscarinic acetylcholine receptor M1 (460 aa).

At 1–22 the chain is on the extracellular side; sequence MNTSVPPAVSPNITVLAPGKGP. N2 and N12 each carry an N-linked (GlcNAc...) asparagine glycan. Residues 23-48 form a helical membrane-spanning segment; that stretch reads WQVAFIGITTGLLSLATVTGNLLVLI. Residues 49-62 are Cytoplasmic-facing; the sequence is SFKVNTELKTVNNY. Residues 63–84 form a helical membrane-spanning segment; the sequence is FLLSLACADLIIGTFSMNLYTT. The Extracellular portion of the chain corresponds to 85–95; sequence YLLMGHWALGT. The helical transmembrane segment at 96-121 threads the bilayer; sequence LACDLWLALDYVASNASVMNLLLISF. A disulfide bridge links C98 with C178. Residues 122–142 are Cytoplasmic-facing; the sequence is DRYFSVTRPLSYRAKRTPRRA. Residues 143-164 traverse the membrane as a helical segment; sequence ALMIGLAWLVSFVLWAPAILFW. Residues 165–185 lie on the Extracellular side of the membrane; sequence QYLVGERTVLAGQCYIQFLSQ. The helical transmembrane segment at 186-209 threads the bilayer; sequence PIITFGTAMAAFYLPVTVMCTLYW. At 210-366 the chain is on the cytoplasmic side; the sequence is RIYRETENRA…LVKEKKAART (157 aa). 3 disordered regions span residues 225–257, 274–297, and 310–351; these read LQGS…SPPG, WKEE…EEPG, and EAQA…QLAK. T230 bears the Phosphothreonine mark. Residues 238 to 257 show a composition bias toward low complexity; that stretch reads SSSSERSQPGAEGSPESPPG. Phosphoserine is present on S254. Basic residues predominate over residues 328 to 343; the sequence is RPTKKGRDRGGKGQKP. The chain crosses the membrane as a helical span at residues 367-390; the sequence is LSAILLAFILTWTPYNIMVLVSTF. Topologically, residues 391–397 are extracellular; sequence CKDCVPE. A helical membrane pass occupies residues 398 to 420; that stretch reads TLWELGYWLCYVNSTVNPMCYAL. The Cytoplasmic portion of the chain corresponds to 421–460; the sequence is CNKAFRDTFRLLLLCRWDKRRWRKIPKRPGSVHRTPSRQC. S451 carries the post-translational modification Phosphoserine. T455 carries the phosphothreonine modification. S457 bears the Phosphoserine mark.

The protein belongs to the G-protein coupled receptor 1 family. Muscarinic acetylcholine receptor subfamily. CHRM1 sub-subfamily. As to quaternary structure, interacts with GPRASP2. Interacts with TMEM147.

The protein localises to the cell membrane. The protein resides in the postsynaptic cell membrane. Functionally, the muscarinic acetylcholine receptor mediates various cellular responses, including inhibition of adenylate cyclase, breakdown of phosphoinositides and modulation of potassium channels through the action of G proteins. Primary transducing effect is Pi turnover. The polypeptide is Muscarinic acetylcholine receptor M1 (Chrm1) (Mus musculus (Mouse)).